The primary structure comprises 363 residues: Probable F-box protein At4g22165 (363 aa).

One can recognise an F-box domain in the interval 7–56 (PNTWSELPLDLLNLVFKRLSLVNFQRAKSVCSTRYSVSRQCVPERQIALL).

This chain is Probable F-box protein At4g22165, found in Arabidopsis thaliana (Mouse-ear cress).